Reading from the N-terminus, the 115-residue chain is NADH-ubiquinone oxidoreductase chain 3 (115 aa).

3 helical membrane passes run 3–23 (LYTVIFINILLSLTLILVAFW), 55–75 (FFLVAITFLLFDLEIALLLPL), and 86–106 (TMMIMAFILVTILSLGLAYEW).

The protein belongs to the complex I subunit 3 family. As to quaternary structure, core subunit of respiratory chain NADH dehydrogenase (Complex I) which is composed of 45 different subunits. Interacts with TMEM186. Interacts with TMEM242.

It is found in the mitochondrion inner membrane. It catalyses the reaction a ubiquinone + NADH + 5 H(+)(in) = a ubiquinol + NAD(+) + 4 H(+)(out). Functionally, core subunit of the mitochondrial membrane respiratory chain NADH dehydrogenase (Complex I) which catalyzes electron transfer from NADH through the respiratory chain, using ubiquinone as an electron acceptor. Essential for the catalytic activity of complex I. The polypeptide is NADH-ubiquinone oxidoreductase chain 3 (Mus musculus (Mouse)).